The sequence spans 587 residues: Folylpolyglutamate synthase, mitochondrial (587 aa).

The N-terminal 42 residues, 1-42 (MSRARSHLRAALFLAAASARGITTQVAARRGLSAWPVPQEPS), are a transit peptide targeting the mitochondrion. Met43 carries the post-translational modification N-acetylmethionine. 106-109 (GKGS) serves as a coordination point for ATP. Mg(2+) contacts are provided by Ser130, Glu200, and His228. Positions 363 and 377 each coordinate ATP. Ser539 is subject to Phosphoserine.

Belongs to the folylpolyglutamate synthase family. As to quaternary structure, monomer. Requires K(+) as cofactor. It depends on NH4(+) as a cofactor.

The protein resides in the mitochondrion inner membrane. Its subcellular location is the mitochondrion matrix. It localises to the cytoplasm. It carries out the reaction (6S)-5,6,7,8-tetrahydrofolyl-(gamma-L-Glu)(n) + L-glutamate + ATP = (6S)-5,6,7,8-tetrahydrofolyl-(gamma-L-Glu)(n+1) + ADP + phosphate + H(+). The protein operates within cofactor biosynthesis; tetrahydrofolylpolyglutamate biosynthesis. Its activity is regulated as follows. Activated by 10 mM sodium bicarbonate. Functionally, catalyzes conversion of folates to polyglutamate derivatives allowing concentration of folate compounds in the cell and the intracellular retention of these cofactors, which are important substrates for most of the folate-dependent enzymes that are involved in one-carbon transfer reactions involved in purine, pyrimidine and amino acid synthesis. Unsubstituted reduced folates are the preferred substrates. Metabolizes methotrexate (MTX) to polyglutamates. The sequence is that of Folylpolyglutamate synthase, mitochondrial (FPGS) from Homo sapiens (Human).